A 296-amino-acid polypeptide reads, in one-letter code: tRNA dimethylallyltransferase (296 aa).

Residue 2 to 9 (GPTASGKT) participates in ATP binding. A substrate-binding site is contributed by 4-9 (TASGKT). Interaction with substrate tRNA stretches follow at residues 27–30 (DSAL), 151–155 (QRLSR), and 232–237 (RCVGYR).

Belongs to the IPP transferase family. Monomer. Mg(2+) is required as a cofactor.

It catalyses the reaction adenosine(37) in tRNA + dimethylallyl diphosphate = N(6)-dimethylallyladenosine(37) in tRNA + diphosphate. Its function is as follows. Catalyzes the transfer of a dimethylallyl group onto the adenine at position 37 in tRNAs that read codons beginning with uridine, leading to the formation of N6-(dimethylallyl)adenosine (i(6)A). The polypeptide is tRNA dimethylallyltransferase (Shewanella baltica (strain OS155 / ATCC BAA-1091)).